A 458-amino-acid polypeptide reads, in one-letter code: Sulfite exporter TauE/SafE family protein 2 (458 aa).

12 helical membrane passes run 5 to 25, 53 to 73, 74 to 94, 101 to 121, 128 to 148, 150 to 170, 227 to 247, 267 to 287, 324 to 344, 348 to 368, 386 to 406, and 418 to 438; these read FVPIILSFIIFLTPSIAEQEP, IELTTSTIIAGLLSFLASSIS, SAGGIGGGGLYVPIMTIVAGL, SFSAFMVTGGSIANVGCNLFV, GKTLIDFDLALLLEPCMLLGV, IGVICNLVFPNWLITSLFAVF, FPWIKLGVLVIIWLSYFAVYL, YWLISSSQIPLTLFFTLWICF, VMALLAGVLGGVFGIGGGMLI, LLQVGIAPEVTAATCSFMVLF, GTASIFAVICFVASLVGLKVV, and IIVFSVGIVMALSIVLMTSYG.

The protein belongs to the 4-toluene sulfonate uptake permease (TSUP) (TC 2.A.102) family.

The protein localises to the membrane. This chain is Sulfite exporter TauE/SafE family protein 2, found in Arabidopsis thaliana (Mouse-ear cress).